The chain runs to 2376 residues: Serine/threonine-protein kinase WNK1 (2376 aa).

Disordered regions lie at residues 1-78 (MSGG…EHRF) and 93-201 (ELPG…QQDD). 2 stretches are compositionally biased toward low complexity: residues 10–19 (SSPPGSLFLS) and 40–49 (GAAAADAGAG). A phosphoserine mark is found at serine 15 and serine 19. Residues 50-66 (RTEEYRRRRHTMDKDSR) show a composition bias toward basic and acidic residues. The residue at position 60 (threonine 60) is a Phosphothreonine. The span at 125-158 (TPAVAHVAQQPPAAATPGEPAAAVPAAASAPGSA) shows a compositional bias: low complexity. The residue at position 172 (serine 172) is a Phosphoserine. Positions 219–477 (LKFDIEIGRG…IKDLLNHAFF (259 aa)) constitute a Protein kinase domain. Serine 229 lines the ATP pocket. Chloride is bound by residues phenylalanine 281 and leucine 297. ATP is bound by residues 299-302 (TELM) and lysine 349. Aspartate 366 (proton acceptor) is an active-site residue. Positions 367 and 369 each coordinate chloride. Phosphoserine; by autocatalysis occurs at positions 376 and 380. An autoinhibitory domain region spans residues 486–553 (ELAEEDDGEK…VCEGDHKTMA (68 aa)). A compositionally biased stretch (basic and acidic residues) spans 571–586 (QLVREEQEKRKQEESS). Disordered stretches follow at residues 571 to 641 (QLVR…QLQY), 701 to 799 (AQPH…PVPT), and 1026 to 1118 (TTSS…SRPK). Low complexity-rich tracts occupy residues 587–601 (LKQQGEQQSSASQAG) and 614–624 (AAATTSASVST). Residues 627-637 (EPEEPEADQHQ) form an interaction with KLHL3 region. A compositionally biased stretch (low complexity) spans 708 to 752 (PPSSMAQGQSQGQPSSSSLTGIPSSQPVQHSQQQQGVQQTAPSQQ). Positions 753-766 (TVQYSLPQTSAPSE) are enriched in polar residues. The segment covering 1045–1057 (PPEPVPAAPPQPT) has biased composition (pro residues). The segment covering 1079–1089 (SDGNENVPSSS) has biased composition (polar residues). Residues 1097–1118 (IKRHYRKSVRSRSRHEKTSRPK) are compositionally biased toward basic residues. Positions 1257 to 1260 (RFIV) match the RFXV motif 1 motif. Serine 1261 carries the post-translational modification Phosphoserine. Disordered stretches follow at residues 1459–1478 (STAAPGAKPPPVSSQQVSGS) and 1734–1770 (STIPAVKPGTAPSKPPSTKPPVLPLGTELPAGTPPSE). The span at 1746-1756 (SKPPSTKPPVL) shows a compositional bias: pro residues. An RFXV motif 2 motif is present at residues 1853–1856 (RFQV). Residues 1862–1878 (DTQKEGKNKSEDVKSVH) are compositionally biased toward basic and acidic residues. Positions 1862 to 1942 (DTQKEGKNKS…QPTKVGRFQV (81 aa)) are disordered. A compositionally biased stretch (low complexity) spans 1881-1899 (SSTSESSVLSSSSPESTLV). 2 consecutive short sequence motifs (RFXV motif) follow at residues 1939–1942 (RFQV) and 1951–1954 (RFSV). Phosphoserine is present on residues serine 1972, serine 1996, serine 2005, serine 2006, serine 2021, serine 2023, and serine 2026. Disordered regions lie at residues 1991–2033 (EKPE…LCSK) and 2110–2239 (AAAP…RKGT). Residues 2116–2128 (GRRRRPTKSKGSK) show a composition bias toward basic residues. A compositionally biased stretch (low complexity) spans 2129–2141 (SSRSSSLGNKSPG). 2 stretches are compositionally biased toward polar residues: residues 2146-2161 (LSGQSTATVLHPQQTL) and 2169-2193 (ETGQNQLLQPLKPSPSSDNLYSAFT). The span at 2207 to 2223 (GQGTSSTNTVGGTVSSQ) shows a compositional bias: low complexity. Residues 2224–2238 (AAQAQPPTMTSSRKG) show a composition bias toward polar residues. Positions 2235–2255 (SRKGTFTDDLHKLVDNWARDA) are amphipathic alpha-helix. 4 positions are modified to phosphoserine: serine 2264, serine 2280, serine 2364, and serine 2366.

This sequence belongs to the protein kinase superfamily. Ser/Thr protein kinase family. WNK subfamily. As to quaternary structure, interacts with WNK3. Interacts with WNK4; inhibiting the activity of WNK4. Interacts with SGK1; promoting its activation. Associates with the mTORC2 complex. Interacts with UVRAG. Interacts (via amphipathic alpha-helix region) with EMC2; promoting the ER membrane protein complex assembly. Mg(2+) serves as cofactor. In terms of processing, autophosphorylated at Ser-376 and Ser-380, promoting its activity. Autophosphorylation at Ser-380 is inhibited by intracellular calcium. Phosphorylation at Thr-60 increases ability to activate SGK1. Ubiquitinated by the BCR(KLHL3) complex, leading to its degradation. Also ubiquitinated by the BCR(KLHL2) complex.

The protein localises to the cytoplasm. Its subcellular location is the nucleus. The protein resides in the cytoskeleton. It is found in the spindle. The enzyme catalyses L-seryl-[protein] + ATP = O-phospho-L-seryl-[protein] + ADP + H(+). It catalyses the reaction L-threonyl-[protein] + ATP = O-phospho-L-threonyl-[protein] + ADP + H(+). With respect to regulation, activated in response to hyperosmotic stress: cell shrinkage promotes formation of a membraneless compartment that concentrates WNK1 with its substrates, OXSR1/OSR1 and STK39/SPAK. Activation requires autophosphorylation of Ser-380 and, to a lower extent, Ser-376. Autophosphorylation and subsequent activation is inhibited by increases in intracellular ionic strength: Cl(-) potently inhibits WNK1 kinase activity via direct binding. Also inhibited by K(+) ions. In terms of biological role, serine/threonine-protein kinase component of the WNK1-SPAK/OSR1 kinase cascade, which acts as a key regulator of blood pressure and regulatory volume increase by promoting ion influx. WNK1 mediates regulatory volume increase in response to hyperosmotic stress by acting as a molecular crowding sensor, which senses cell shrinkage and mediates formation of a membraneless compartment by undergoing liquid-liquid phase separation. The membraneless compartment concentrates WNK1 with its substrates, OXSR1/OSR1 and STK39/SPAK, promoting WNK1-dependent phosphorylation and activation of downstream kinases OXSR1/OSR1 and STK39/SPAK. Following activation, OXSR1/OSR1 and STK39/SPAK catalyze phosphorylation of ion cotransporters SLC12A1/NKCC2, SLC12A2/NKCC1, SLC12A5/KCC2 and SLC12A6/KCC3, regulating their activity. Phosphorylation of Na-K-Cl cotransporters SLC12A2/NKCC1 and SLC12A2/NKCC1 promote their activation and ion influx; simultaneously, phosphorylation of K-Cl cotransporters SLC12A5/KCC2 and SLC12A6/KCC3 inhibit their activity, blocking ion efflux. Also acts as a regulator of angiogenesis in endothelial cells via activation of OXSR1/OSR1 and STK39/SPAK: activation of OXSR1/OSR1 regulates chemotaxis and invasion, while STK39/SPAK regulates endothelial cell proliferation. Also acts independently of the WNK1-SPAK/OSR1 kinase cascade by catalyzing phosphorylation of other substrates, such as SYT2, PCF11 and NEDD4L. Mediates phosphorylation of SYT2, regulating SYT2 association with phospholipids and membrane-binding. Regulates mRNA export in the nucleus by mediating phosphorylation of PCF11, thereby decreasing the association between PCF11 and POLR2A/RNA polymerase II and promoting mRNA export to the cytoplasm. Acts as a negative regulator of autophagy. Required for the abscission step during mitosis, independently of the WNK1-SPAK/OSR1 kinase cascade. May also play a role in actin cytoskeletal reorganization. Also acts as a scaffold protein independently of its protein kinase activity: negatively regulates cell membrane localization of various transporters and channels, such as SLC4A4, SLC26A6, SLC26A9, TRPV4 and CFTR. Involved in the regulation of epithelial Na(+) channel (ENaC) by promoting activation of SGK1 in a kinase-independent manner: probably acts as a scaffold protein that promotes the recruitment of SGK1 to the mTORC2 complex in response to chloride, leading to mTORC2-dependent phosphorylation and activation of SGK1. Acts as an assembly factor for the ER membrane protein complex independently of its protein kinase activity: associates with EMC2 in the cytoplasm via its amphipathic alpha-helix, and prevents EMC2 ubiquitination and subsequent degradation, thereby promoting EMC2 stabilization. This is Serine/threonine-protein kinase WNK1 from Sus scrofa (Pig).